The primary structure comprises 343 residues: Anthranilate phosphoribosyltransferase (343 aa).

5-phospho-alpha-D-ribose 1-diphosphate contacts are provided by residues Gly-84, 87 to 88 (GD), Thr-92, 94 to 97 (NIST), 112 to 120 (KHGNRSVSS), and Ser-124. Gly-84 serves as a coordination point for anthranilate. Ser-96 contacts Mg(2+). Asn-115 provides a ligand contact to anthranilate. Arg-170 contacts anthranilate. The Mg(2+) site is built by Asp-229 and Glu-230.

Belongs to the anthranilate phosphoribosyltransferase family. As to quaternary structure, homodimer. Mg(2+) is required as a cofactor.

The catalysed reaction is N-(5-phospho-beta-D-ribosyl)anthranilate + diphosphate = 5-phospho-alpha-D-ribose 1-diphosphate + anthranilate. It functions in the pathway amino-acid biosynthesis; L-tryptophan biosynthesis; L-tryptophan from chorismate: step 2/5. Catalyzes the transfer of the phosphoribosyl group of 5-phosphorylribose-1-pyrophosphate (PRPP) to anthranilate to yield N-(5'-phosphoribosyl)-anthranilate (PRA). The polypeptide is Anthranilate phosphoribosyltransferase (Stenotrophomonas maltophilia (strain R551-3)).